We begin with the raw amino-acid sequence, 320 residues long: E3 ubiquitin-protein ligase RZF1 (320 aa).

Ser2 is subject to N-acetylserine. The RING-type; atypical zinc-finger motif lies at 186–227 (CPVCKDEFELKSEAKQMPCHHIYHSDCIVPWLVQHNSCPVCR). A disordered region spans residues 229–320 (ELPSRGSSSS…MGYSGWPFDY (92 aa)). 2 stretches are compositionally biased toward low complexity: residues 232–249 (SRGS…STNG) and 295–308 (QQQQ…QQQQ).

In terms of tissue distribution, expressed in seedlings and in flowers.

It catalyses the reaction S-ubiquitinyl-[E2 ubiquitin-conjugating enzyme]-L-cysteine + [acceptor protein]-L-lysine = [E2 ubiquitin-conjugating enzyme]-L-cysteine + N(6)-ubiquitinyl-[acceptor protein]-L-lysine.. In terms of biological role, E3 ubiquitin-protein ligase that promotes osmotic stress and abscisic acid (ABA) responses. Negatively regulates drought-mediated control of early seedling development, probably by influencing proline content, water loss, membrane ion leakage and the expression of dehydration stress-related genes (e.g. RAB18, RD29A, RD29B, AOX1A, ERD15, ERD1, COR15A, P5CS1 and P5CR). Modulates bZIP11 accumulation during rehydration following drought. This chain is E3 ubiquitin-protein ligase RZF1, found in Arabidopsis thaliana (Mouse-ear cress).